Here is a 318-residue protein sequence, read N- to C-terminus: MTRHIILDCDPGHDDAIALILALAHPDLVPLAVTTSAGNQTPDKTLNNALRILTLLNRGDIPVAGGATKPLTRELIIADNVHGETGLDGPALPEPSFSPQAITAVELMAQQIRQSTQPVTLVPTGPLTNIALLLASHSELHPKIERIVLMGGAAGVGNWTPAAEFNIFVDPEAADIVFKSGIPITMCGLDVTHQAQIMDEDIERIRAIPNPIAQCVAELLDFFMIYHRDPKWGFIGAPLHDPCTIAWLLKPELFEAQDCWVGIETQSELTLGMTVVDRYQLTGKTANATVLFGLDRLGFVDLLVDSLRVYDPTYLNRR.

H240 is a catalytic residue.

It belongs to the IUNH family. RihA subfamily.

Functionally, hydrolyzes cytidine or uridine to ribose and cytosine or uracil, respectively. The chain is Pyrimidine-specific ribonucleoside hydrolase RihA from Shewanella baltica (strain OS155 / ATCC BAA-1091).